We begin with the raw amino-acid sequence, 397 residues long: Acylalkylpyrone synthase csyB (397 aa).

Residues lysine 50 and 50-57 contribute to the CoA site; that span reads KMLEINRK. Cysteine 155 functions as the Nucleophile in the catalytic mechanism. A substrate-binding site is contributed by 214–215; the sequence is GD. Residues isoleucine 267, glycine 312, 312–315, tyrosine 314, and alanine 315 contribute to the CoA site; that span reads GGYA. Histidine 377 is an active-site residue.

It belongs to the thiolase-like superfamily. Chalcone/stilbene synthases family. In terms of assembly, homodimer.

Its function is as follows. Acylalkylpyrone synthase that catalyzes not only the polyketide chain elongation but also the one-pot condensation of two beta-ketoacyl units to produce the 3-acyl-4-hydroxy-6-alkyl-alpha-pyrone (AcAP) scaffold, a precursor of csypyrone B. The enzyme reaction is initiated by the loading of acetoacetyl-CoA onto Cys-155, and subsequent thioester bond cleavage by the nucleophilic water generates the beta-keto acid intermediate, which is placed within a pocket. The second beta-ketoacyl unit is then produced by polyketide chain elongation of fatty acyl-CoA with one molecule of malonyl-CoA, and the condensation with the beta-ketoacid generates the final products. Csypyrone B1 is the major product and contains a propanoic acid side-chain, whereas csypyrones B2 and B3 are minor compounds that contain butyric or pentanoic acid side-chains, respectively. The chain is Acylalkylpyrone synthase csyB from Aspergillus oryzae (strain ATCC 42149 / RIB 40) (Yellow koji mold).